Consider the following 311-residue polypeptide: Methionyl-tRNA formyltransferase (311 aa).

Position 111–114 (Ser-111–Pro-114) interacts with (6S)-5,6,7,8-tetrahydrofolate.

The protein belongs to the Fmt family.

The catalysed reaction is L-methionyl-tRNA(fMet) + (6R)-10-formyltetrahydrofolate = N-formyl-L-methionyl-tRNA(fMet) + (6S)-5,6,7,8-tetrahydrofolate + H(+). In terms of biological role, attaches a formyl group to the free amino group of methionyl-tRNA(fMet). The formyl group appears to play a dual role in the initiator identity of N-formylmethionyl-tRNA by promoting its recognition by IF2 and preventing the misappropriation of this tRNA by the elongation apparatus. The chain is Methionyl-tRNA formyltransferase from Caldicellulosiruptor saccharolyticus (strain ATCC 43494 / DSM 8903 / Tp8T 6331).